Here is a 247-residue protein sequence, read N- to C-terminus: 2,3-bisphosphoglycerate-dependent phosphoglycerate mutase (247 aa).

Residues 8–15 (RHGESVWN), 21–22 (TG), arginine 60, 87–90 (ERHY), lysine 98, 114–115 (RR), and 183–184 (GN) each bind substrate. Residue histidine 9 is the Tele-phosphohistidine intermediate of the active site. The active-site Proton donor/acceptor is the glutamate 87.

Belongs to the phosphoglycerate mutase family. BPG-dependent PGAM subfamily. In terms of assembly, homodimer.

The catalysed reaction is (2R)-2-phosphoglycerate = (2R)-3-phosphoglycerate. The protein operates within carbohydrate degradation; glycolysis; pyruvate from D-glyceraldehyde 3-phosphate: step 3/5. Its function is as follows. Catalyzes the interconversion of 2-phosphoglycerate and 3-phosphoglycerate. This Geobacter metallireducens (strain ATCC 53774 / DSM 7210 / GS-15) protein is 2,3-bisphosphoglycerate-dependent phosphoglycerate mutase.